The primary structure comprises 613 residues: Nuclear receptor subfamily 1 group D member 1 (613 aa).

Residues 1–48 (MTTLDSNNNTGGVITYIGSSGSSPNRTSPESLYSDSSNGSFQSLTQGC) are compositionally biased toward polar residues. A required for phosphorylation by CSNK1E and cytoplasmic localization region spans residues 1–70 (MTTLDSNNNT…TQDPARSFGS (70 aa)). A disordered region spans residues 1 to 102 (MTTLDSNNNT…SSFYNGSPPG (102 aa)). The interval 1–129 (MTTLDSNNNT…TSNITKLNGM (129 aa)) is modulating. The interval 49 to 285 (PTYFPPSPTG…PPRSPSPEPT (237 aa)) is crucial for activation of GJA1. Phosphoserine; by GSK3-beta is present on residues Ser55 and Ser59. Positions 69-102 (GSIPPSLGDDGSPSSSSSSSSSSSSSFYNGSPPG) are enriched in low complexity. The segment at residues 130–206 (VLLCKVCGDV…VGMSRDAVRF (77 aa)) is a DNA-binding region (nuclear receptor). 2 NR C4-type zinc fingers span residues 133–153 (CKVC…CEGC) and 170–194 (CLKN…FKKC). N6-acetyllysine; by KAT5 is present on residues Lys192 and Lys193. The segment at 233-286 (SSQCPLETPPTQHPTPGPMGPSPPPAPAPSPLVGFSQFPQQLTPPRSPSPEPTV) is disordered. The span at 239–262 (ETPPTQHPTPGPMGPSPPPAPAPS) shows a compositional bias: pro residues. Thr275 carries the post-translational modification Phosphothreonine; by CDK1. Residues 285–613 (TVEDVISQVA…KLLSFRVDAQ (329 aa)) enclose the NR LBD domain. Residue Cys417 coordinates heme. Lys590 carries the N6-acetyllysine modification. His601 contributes to the heme binding site.

The protein belongs to the nuclear hormone receptor family. NR1 subfamily. Binds DNA as a monomer or a homodimer. Interacts with C1D, SP1 and ZNHIT1. Interacts with OPHN1 (via C-terminus). Interacts with PER2; the interaction associates PER2 to BMAL1 promoter region. Interacts with CRY1. Interacts with CCAR2. Interacts with NR2E3. Interacts with SIAH2. Interacts with FBXW7 and CDK1. Interacts with HUWE1. Interacts with NR0B2. Interacts with NFIL3. Interacts (via domain NR LBD) with HSP90AA1 and HSP90AB1. Post-translationally, ubiquitinated, leading to its proteasomal degradation. Ubiquitinated by the SCF(FBXW7) complex when phosphorylated by CDK1 leading to its proteasomal degradation. Ubiquitinated by SIAH2; leading to its proteasomal degradation. Rapidly ubiquitinated in response to inflammatory triggers and sumoylation is a prerequisite to its ubiquitination. In terms of processing, sumoylated by UBE2I, desumoylated by SENP1, and sumoylation is a prerequisite to its ubiquitination. Phosphorylated by CSNK1E; phosphorylation enhances its cytoplasmic localization. Post-translationally, undergoes lysosome-mediated degradation in a time-dependent manner in the liver. As to expression, expressed in all tissues and cell lines examined. Expressed at high levels in some squamous carcinoma cell lines.

Its subcellular location is the nucleus. It is found in the cytoplasm. The protein localises to the cell projection. The protein resides in the dendrite. It localises to the dendritic spine. Functionally, transcriptional repressor which coordinates circadian rhythm and metabolic pathways in a heme-dependent manner. Integral component of the complex transcription machinery that governs circadian rhythmicity and forms a critical negative limb of the circadian clock by directly repressing the expression of core clock components BMAL1, CLOCK and CRY1. Also regulates genes involved in metabolic functions, including lipid and bile acid metabolism, adipogenesis, gluconeogenesis and the macrophage inflammatory response. Acts as a receptor for heme which stimulates its interaction with the NCOR1/HDAC3 corepressor complex, enhancing transcriptional repression. Recognizes two classes of DNA response elements within the promoter of its target genes and can bind to DNA as either monomers or homodimers, depending on the nature of the response element. Binds as a monomer to a response element composed of the consensus half-site motif 5'-[A/G]GGTCA-3' preceded by an A/T-rich 5' sequence (RevRE), or as a homodimer to a direct repeat of the core motif spaced by two nucleotides (RevDR-2). Acts as a potent competitive repressor of ROR alpha (RORA) function and regulates the levels of its ligand heme by repressing the expression of PPARGC1A, a potent inducer of heme synthesis. Regulates lipid metabolism by repressing the expression of APOC3 and by influencing the activity of sterol response element binding proteins (SREBPs); represses INSIG2 which interferes with the proteolytic activation of SREBPs which in turn govern the rhythmic expression of enzymes with key functions in sterol and fatty acid synthesis. Regulates gluconeogenesis via repression of G6PC1 and PEPCK and adipocyte differentiation via repression of PPARG. Regulates glucagon release in pancreatic alpha-cells via the AMPK-NAMPT-SIRT1 pathway and the proliferation, glucose-induced insulin secretion and expression of key lipogenic genes in pancreatic-beta cells. Positively regulates bile acid synthesis by increasing hepatic expression of CYP7A1 via repression of NR0B2 and NFIL3 which are negative regulators of CYP7A1. Modulates skeletal muscle oxidative capacity by regulating mitochondrial biogenesis and autophagy; controls mitochondrial biogenesis and respiration by interfering with the STK11-PRKAA1/2-SIRT1-PPARGC1A signaling pathway. Represses the expression of SERPINE1/PAI1, an important modulator of cardiovascular disease and the expression of inflammatory cytokines and chemokines in macrophages. Represses gene expression at a distance in macrophages by inhibiting the transcription of enhancer-derived RNAs (eRNAs). Plays a role in the circadian regulation of body temperature and negatively regulates thermogenic transcriptional programs in brown adipose tissue (BAT); imposes a circadian oscillation in BAT activity, increasing body temperature when awake and depressing thermogenesis during sleep. In concert with NR2E3, regulates transcriptional networks critical for photoreceptor development and function. In addition to its activity as a repressor, can also act as a transcriptional activator. In the ovarian granulosa cells acts as a transcriptional activator of STAR which plays a role in steroid biosynthesis. In collaboration with SP1, activates GJA1 transcription in a heme-independent manner. Represses the transcription of CYP2B10, CYP4A10 and CYP4A14. Represses the transcription of CES2. Represses and regulates the circadian expression of TSHB in a NCOR1-dependent manner. Negatively regulates the protein stability of NR3C1 and influences the time-dependent subcellular distribution of NR3C1, thereby affecting its transcriptional regulatory activity. Plays a critical role in the circadian control of neutrophilic inflammation in the lung; under resting, non-stress conditions, acts as a rhythmic repressor to limit inflammatory activity whereas in the presence of inflammatory triggers undergoes ubiquitin-mediated degradation thereby relieving inhibition of the inflammatory response. Plays a key role in the circadian regulation of microglial activation and neuroinflammation; suppresses microglial activation through the NF-kappaB pathway in the central nervous system. Plays a role in the regulation of the diurnal rhythms of lipid and protein metabolism in the skeletal muscle via transcriptional repression of genes controlling lipid and amino acid metabolism in the muscle. The sequence is that of Nuclear receptor subfamily 1 group D member 1 (NR1D1) from Bos taurus (Bovine).